The chain runs to 223 residues: Cytidylate kinase (223 aa).

Gly10–Thr18 contributes to the ATP binding site.

This sequence belongs to the cytidylate kinase family. Type 1 subfamily.

It localises to the cytoplasm. The enzyme catalyses CMP + ATP = CDP + ADP. The catalysed reaction is dCMP + ATP = dCDP + ADP. In Streptococcus pneumoniae serotype 4 (strain ATCC BAA-334 / TIGR4), this protein is Cytidylate kinase.